Here is a 953-residue protein sequence, read N- to C-terminus: Lysosomal alpha-glucosidase (953 aa).

Positions 1–27 (MNIRKPLCSNSVVGACTLISLTTAVIL) are cleaved as a signal peptide. Residues 28–69 (GHLMLRELMLLPQDLHESSSGLWKTYRPHHQEGYKPGPLHIQ) constitute a propeptide that is removed on maturation. The 52-residue stretch at 80-131 (TQCDVPPSSRFDCAPDKGISQEQCEARGCCYVPAGQVLKEPQIGQPWCFFPP) folds into the P-type domain. Intrachain disulfides connect Cys82-Cys109, Cys92-Cys108, and Cys103-Cys127. 3 N-linked (GlcNAc...) asparagine glycosylation sites follow: Asn140, Asn233, and Asn390. Residue Asp404 coordinates substrate. The N-linked (GlcNAc...) asparagine glycan is linked to Asn470. Asp518 functions as the Nucleophile in the catalytic mechanism. The active site involves Glu521. Cys533 and Cys558 are joined by a disulfide. Substrate-binding residues include Arg600 and Asp616. Cys647 and Cys658 form a disulfide bridge. His674 serves as a coordination point for substrate. N-linked (GlcNAc...) asparagine glycosylation is found at Asn883, Asn926, and Asn933.

The protein belongs to the glycosyl hydrolase 31 family.

The protein resides in the lysosome. It is found in the lysosome membrane. It catalyses the reaction Hydrolysis of terminal, non-reducing (1-&gt;4)-linked alpha-D-glucose residues with release of alpha-D-glucose.. Functionally, essential for the degradation of glycogen in lysosomes. Has highest activity on alpha-1,4-linked glycosidic linkages, but can also hydrolyze alpha-1,6-linked glucans. The sequence is that of Lysosomal alpha-glucosidase (Gaa) from Mus musculus (Mouse).